Consider the following 283-residue polypeptide: Pantothenate synthetase (283 aa).

Position 30–37 (30–37 (MGNLHDGH)) interacts with ATP. H37 acts as the Proton donor in catalysis. A (R)-pantoate-binding site is contributed by Q61. Q61 is a binding site for beta-alanine. Residue 149-152 (GEKD) participates in ATP binding. Residue Q155 coordinates (R)-pantoate. Position 186–189 (186–189 (LSSR)) interacts with ATP.

This sequence belongs to the pantothenate synthetase family. In terms of assembly, homodimer.

The protein localises to the cytoplasm. The enzyme catalyses (R)-pantoate + beta-alanine + ATP = (R)-pantothenate + AMP + diphosphate + H(+). It functions in the pathway cofactor biosynthesis; (R)-pantothenate biosynthesis; (R)-pantothenate from (R)-pantoate and beta-alanine: step 1/1. In terms of biological role, catalyzes the condensation of pantoate with beta-alanine in an ATP-dependent reaction via a pantoyl-adenylate intermediate. This Escherichia coli (strain SMS-3-5 / SECEC) protein is Pantothenate synthetase.